A 430-amino-acid chain; its full sequence is MEF2-activating motif and SAP domain-containing transcriptional regulator (430 aa).

The short motif at 12–28 (IIRSKFRSVLQLRIHRR) is the MEF2-binding element. 4 disordered regions span residues 84-172 (CWSL…PLPH), 204-239 (KSML…RFRP), 280-301 (VATT…APAS), and 330-416 (EDQV…DLSD). Residues 87 to 103 (LKKESPKTSQHWREPKP) show a composition bias toward basic and acidic residues. Residues 147-170 (QPPPRMKPTPLTPSPPGVPSPSPL) are compositionally biased toward pro residues. The region spanning 181–215 (LEELTVSELRQQLRLRGLPVSGTKSMLLERMRGGA) is the SAP domain. A compositionally biased stretch (basic and acidic residues) spans 207-228 (LLERMRGGAPPRERPKARREDS). The tract at residues 224 to 430 (RREDSAAGAP…RLWDLLEDPW (207 aa)) is transcription activation. Composition is skewed to low complexity over residues 363-373 (SSVFSSSLPSP) and 393-403 (ALSGGPSLGCG).

As to quaternary structure, interacts with MEF2C.

It localises to the nucleus. Transcriptional coactivator. Stimulates the transcriptional activity of MEF2C. Stimulates MYOD1 activity in part via MEF2, resulting in an enhancement of skeletal muscle differentiation. This chain is MEF2-activating motif and SAP domain-containing transcriptional regulator (MAMSTR), found in Bos taurus (Bovine).